The following is a 711-amino-acid chain: BCLAF1 and THRAP3 family member 3 (711 aa).

Over residues 1–15 (MARSRSRSPRWKHRS) the composition is skewed to basic residues. Disordered stretches follow at residues 1 to 42 (MARS…YRKD) and 48 to 67 (AWRM…PSRG). Phosphoserine is present on residues Ser15 and Ser17. A compositionally biased stretch (basic and acidic residues) spans 48–57 (AWRMDSEKHG). Residues Ser78, Ser80, and Ser187 each carry the phosphoserine modification. Disordered regions lie at residues 94 to 350 (KPHR…KDSI) and 371 to 404 (EKIK…PSPI). Basic and acidic residues-rich tracts occupy residues 163–197 (FRFE…DFET), 204–213 (RYPEDRDFRK), 220–242 (RPKD…KPEH), 296–311 (SDGR…DRKY), 318–349 (LNRE…KKDS), and 371–383 (EKIK…RKES). Lys400 participates in a covalent cross-link: Glycyl lysine isopeptide (Lys-Gly) (interchain with G-Cter in SUMO2). Residues Ser402 and Ser578 each carry the phosphoserine modification.

It belongs to the BCLAF1/THRAP3 family.

It localises to the mitochondrion. This is BCLAF1 and THRAP3 family member 3 from Homo sapiens (Human).